We begin with the raw amino-acid sequence, 609 residues long: Alpha-glycerophosphate oxidase (609 aa).

FAD is bound at residue 21 to 49; that stretch reads DVLIIGGGITGAGVAVQTAAAGMKTVLLE.

It depends on FAD as a cofactor.

The protein localises to the cytoplasm. The catalysed reaction is sn-glycerol 3-phosphate + O2 = dihydroxyacetone phosphate + H2O2. The protein operates within membrane lipid metabolism; glycerophospholipid metabolism. This Enterococcus casseliflavus (Enterococcus flavescens) protein is Alpha-glycerophosphate oxidase (glpO).